The following is a 684-amino-acid chain: Early phosphoprotein p84 (684 aa).

Disordered regions lie at residues Leu166–Pro301, Ser317–Ala336, Val357–Thr393, Arg407–Phe452, and Ser569–Phe657. A compositionally biased stretch (basic and acidic residues) spans Glu180–Glu191. Positions Ala201–Gly220 are enriched in gly residues. 2 stretches are compositionally biased toward basic and acidic residues: residues Arg232–Pro245 and Arg258–His272. Positions Lys261–Lys264 match the Nuclear localization signal motif. Over residues Gly285–Gly296 the composition is skewed to gly residues. The span at Asn326 to Asn335 shows a compositional bias: basic residues. Over residues Ser359 to Ser377 the composition is skewed to low complexity. The span at Ser425–Ala442 shows a compositional bias: polar residues. Over residues Pro578–Gly587 the composition is skewed to pro residues. Residues Arg598–Arg608 are compositionally biased toward gly residues. Residues Arg612 to Ser622 show a composition bias toward low complexity.

Belongs to the herpesviridae U79/UL112 family. In terms of assembly, isoforms 1, 2, 3 and 4 interacts with themselves and with each other via their shared N-terminal regions; these interactions are important to both their intranuclear targeting and the recruitment of UL44 to subnuclear sites for viral replication.

The protein resides in the host nucleus. It is found in the virion. Functionally, needed for efficient replication. Recruits the DNA polymerase processivity factor to pre-replication foci. In Homo sapiens (Human), this protein is Early phosphoprotein p84 (UL112/UL113).